A 125-amino-acid polypeptide reads, in one-letter code: PEP-dependent dihydroxyacetone kinase 2, phosphoryl donor subunit DhaM (125 aa).

The PTS EIIA type-4 domain occupies 1–125 (MISIVLVSHS…AILQELTNVH (125 aa)). His-9 (tele-phosphohistidine intermediate) is an active-site residue.

Belongs to the PEP-utilizing enzyme family. Homodimer. The dihydroxyacetone kinase complex is composed of a homodimer of DhaM, a homodimer of DhaK and the subunit DhaL.

Its subcellular location is the cytoplasm. It catalyses the reaction dihydroxyacetone + phosphoenolpyruvate = dihydroxyacetone phosphate + pyruvate. Its function is as follows. Component of the dihydroxyacetone kinase complex, which is responsible for the phosphoenolpyruvate (PEP)-dependent phosphorylation of dihydroxyacetone. DhaM serves as the phosphoryl donor. Is phosphorylated by phosphoenolpyruvate in an EI- and HPr-dependent reaction, and a phosphorelay system on histidine residues finally leads to phosphoryl transfer to DhaL and dihydroxyacetone. This chain is PEP-dependent dihydroxyacetone kinase 2, phosphoryl donor subunit DhaM, found in Listeria innocua serovar 6a (strain ATCC BAA-680 / CLIP 11262).